The primary structure comprises 138 residues: Small ribosomal subunit protein uS9 (138 aa).

The protein belongs to the universal ribosomal protein uS9 family.

The chain is Small ribosomal subunit protein uS9 (rps9) from Sulfolobus acidocaldarius (strain ATCC 33909 / DSM 639 / JCM 8929 / NBRC 15157 / NCIMB 11770).